The primary structure comprises 387 residues: tRNA-specific 2-thiouridylase MnmA (387 aa).

ATP contacts are provided by residues 6–13 (AMSGGVDS) and L32. The active-site Nucleophile is C101. Residues C101 and C199 are joined by a disulfide bond. Residue G125 participates in ATP binding. The interval 148–150 (KDQ) is interaction with tRNA. Catalysis depends on C199, which acts as the Cysteine persulfide intermediate.

Belongs to the MnmA/TRMU family.

It localises to the cytoplasm. The catalysed reaction is S-sulfanyl-L-cysteinyl-[protein] + uridine(34) in tRNA + AH2 + ATP = 2-thiouridine(34) in tRNA + L-cysteinyl-[protein] + A + AMP + diphosphate + H(+). Functionally, catalyzes the 2-thiolation of uridine at the wobble position (U34) of tRNA, leading to the formation of s(2)U34. This chain is tRNA-specific 2-thiouridylase MnmA, found in Clavibacter michiganensis subsp. michiganensis (strain NCPPB 382).